Reading from the N-terminus, the 464-residue chain is Glutamate--tRNA ligase (464 aa).

A 'HIGH' region motif is present at residues proline 11–glycine 21. A 'KMSKS' region motif is present at residues lysine 253–arginine 257. Lysine 256 lines the ATP pocket.

This sequence belongs to the class-I aminoacyl-tRNA synthetase family. Glutamate--tRNA ligase type 1 subfamily. Monomer.

Its subcellular location is the cytoplasm. The catalysed reaction is tRNA(Glu) + L-glutamate + ATP = L-glutamyl-tRNA(Glu) + AMP + diphosphate. Functionally, catalyzes the attachment of glutamate to tRNA(Glu) in a two-step reaction: glutamate is first activated by ATP to form Glu-AMP and then transferred to the acceptor end of tRNA(Glu). In Metamycoplasma arthritidis (strain 158L3-1) (Mycoplasma arthritidis), this protein is Glutamate--tRNA ligase.